A 309-amino-acid chain; its full sequence is Pantothenate synthetase (309 aa).

Thr2 bears the N-acetylthreonine mark. ATP is bound at residue 40 to 47 (MGALHEGH). His47 functions as the Proton donor in the catalytic mechanism. Gln72 is a binding site for (R)-pantoate. Gln72 is a binding site for beta-alanine. Mg(2+)-binding residues include Asp88, Asp89, and Gln92. Residue 158 to 161 (GEKD) participates in ATP binding. Gln164 contacts (R)-pantoate. ATP is bound by residues Val187 and 195-198 (MSSR).

Belongs to the pantothenate synthetase family.

Its subcellular location is the cytoplasm. The catalysed reaction is (R)-pantoate + beta-alanine + ATP = (R)-pantothenate + AMP + diphosphate + H(+). The protein operates within cofactor biosynthesis; (R)-pantothenate biosynthesis; (R)-pantothenate from (R)-pantoate and beta-alanine: step 1/1. Its activity is regulated as follows. Pantothenate exhibits uncompetitive inhibition toward both D-pantoate and ATP, and non-competitive inhibition toward beta-alanine. AMPCPP exhibits competitive inhibition toward ATP, uncompetitive inhibition toward beta-alanine, and non-competitive inhibition toward D-pantoate. The enzyme is most active in the presence of magnesium or manganese. Other divalent cations (cobalt, nickel, zinc) are less effective. Its function is as follows. Catalyzes the condensation of pantoate with beta-alanine in an ATP-dependent reaction via a pantoyl-adenylate intermediate. The sequence is that of Pantothenate synthetase (panC) from Mycobacterium tuberculosis (strain ATCC 25618 / H37Rv).